We begin with the raw amino-acid sequence, 547 residues long: Inositol 1,4,5-trisphosphate receptor-interacting protein-like 1 (547 aa).

The signal sequence occupies residues 1 to 22 (MAVISLMFLAVMYVVHHPLMVS). Residues 23–96 (DRMDLDTLAR…PFQAGGQDGG (74 aa)) are Extracellular-facing. A coiled-coil region spans residues 28 to 66 (DTLARSRQLEKRMSEEMRQLEMEFEERSRAAEQKQKVEN). Residues 97–117 (PLGWILGNLWNAGLFCLFLIF) form a helical membrane-spanning segment. Residues 118–547 (ELLRQSMQHE…LPCSPVAGGL (430 aa)) are Cytoplasmic-facing.

The protein belongs to the ITPRIP family.

The protein resides in the cell membrane. Functions as a ligand of CD3E, inhibiting TCR-CD3 complex signaling to regulate T cell activation. Induces stable CD3E-NCK1 binding, thereby preventing the CD3E-ZAP70 interaction and subsequently inhibiting the activation of the downstream ERK-NFkB signaling cascade and calcium influx. The sequence is that of Inositol 1,4,5-trisphosphate receptor-interacting protein-like 1 (Itpripl1) from Mus musculus (Mouse).